The sequence spans 765 residues: Multifunctional tryptophan biosynthesis protein (765 aa).

Residues 2-196 (ATLLIDNYDS…LSLRGGNWDE (195 aa)) form the Glutamine amidotransferase type-1 domain. 53 to 55 (GPG) lines the L-glutamine pocket. C81 (nucleophile; for GATase activity) is an active-site residue. L-glutamine is bound by residues Q85 and 131 to 132 (SL). Active-site for GATase activity residues include H170 and E172. The segment at 231-494 (TILSRIYAQR…NLKEFVAELL (264 aa)) is indole-3-glycerol phosphate synthase. Residues 512–765 (QVKICGISSV…VEKAKSINLQ (254 aa)) are N-(5'-phosphoribosyl)anthranilate isomerase.

It carries out the reaction N-(5-phospho-beta-D-ribosyl)anthranilate = 1-(2-carboxyphenylamino)-1-deoxy-D-ribulose 5-phosphate. The enzyme catalyses 1-(2-carboxyphenylamino)-1-deoxy-D-ribulose 5-phosphate + H(+) = (1S,2R)-1-C-(indol-3-yl)glycerol 3-phosphate + CO2 + H2O. The catalysed reaction is chorismate + L-glutamine = anthranilate + pyruvate + L-glutamate + H(+). It participates in amino-acid biosynthesis; L-tryptophan biosynthesis; L-tryptophan from chorismate: step 1/5. The protein operates within amino-acid biosynthesis; L-tryptophan biosynthesis; L-tryptophan from chorismate: step 3/5. Its pathway is amino-acid biosynthesis; L-tryptophan biosynthesis; L-tryptophan from chorismate: step 4/5. Functionally, trifunctional enzyme bearing the Gln amidotransferase (GATase) domain of anthranilate synthase, indole-glycerolphosphate synthase, and phosphoribosylanthranilate isomerase activities. This chain is Multifunctional tryptophan biosynthesis protein (trp1), found in Phycomyces blakesleeanus.